A 476-amino-acid polypeptide reads, in one-letter code: Exodeoxyribonuclease 7 large subunit (476 aa).

The protein belongs to the XseA family. In terms of assembly, heterooligomer composed of large and small subunits.

It is found in the cytoplasm. It catalyses the reaction Exonucleolytic cleavage in either 5'- to 3'- or 3'- to 5'-direction to yield nucleoside 5'-phosphates.. Its function is as follows. Bidirectionally degrades single-stranded DNA into large acid-insoluble oligonucleotides, which are then degraded further into small acid-soluble oligonucleotides. The polypeptide is Exodeoxyribonuclease 7 large subunit (Bartonella bacilliformis (strain ATCC 35685 / KC583 / Herrer 020/F12,63)).